Reading from the N-terminus, the 970-residue chain is Transcriptional activator protein DAL81 (970 aa).

Disordered stretches follow at residues 1–44, 64–95, and 118–140; these read MDPH…NHDI, NILREKGGSQQQQHQQQQQQQQQQQQQQQQQS, and DNVSNSADHNGSNSNNNNNNNDI. Composition is skewed to low complexity over residues 15 to 41, 73 to 94, and 121 to 140; these read TKSVKATTKNSSTNNNVNSNNSNNNSN, QQQQHQQQQQQQQQQQQQQQQQ, and SNSADHNGSNSNNNNNNNDI. The zn(2)-C6 fungal-type DNA-binding region spans 150–179; sequence CNQCRLKKTKCNYFPDLGNCLECETSRTKC. The span at 807–823 shows a compositional bias: low complexity; sequence SFPNGTTSTTTPVNPTS. The disordered stretch occupies residues 807-970; that stretch reads SFPNGTTSTT…VTINTRETPL (164 aa). Composition is skewed to polar residues over residues 824–836 and 858–870; these read RQTQLESQGSPAI and KTSQSSPNVTPSH. Ser-833 carries the post-translational modification Phosphoserine. The span at 875 to 894 shows a compositional bias: low complexity; that stretch reads PPSNTSSPRVNSSTNVNSNT. Residues 895-906 show a composition bias toward polar residues; that stretch reads QMNASPLTSINE. The span at 907-938 shows a compositional bias: basic and acidic residues; sequence TRQESGDAADEKTAGRERTANEESSTELKDDN. Composition is skewed to polar residues over residues 939–954 and 961–970; these read PNSNQETSATGNQTIK and VTINTRETPL.

It is found in the nucleus. In terms of biological role, positive regulation of genes required for catabolism of GABA (UGA4, UGA1, and UGA2), urea (DUR1 and DUR2), arginine and allantoin. This chain is Transcriptional activator protein DAL81 (DAL81), found in Saccharomyces cerevisiae (strain ATCC 204508 / S288c) (Baker's yeast).